The sequence spans 33 residues: DQDDDIENVITLIETKENQTEQIKXQXXQLLQD.

The chain is Unknown 31.6 kDa protein from 2D-PAGE from Onion yellows phytoplasma.